The following is a 222-amino-acid chain: MESGNVVNVQSELSGIIDGSKSYMYEQLWKLCAGPLCDIPKLGEKVYYFPQGHIELVEASTREELNELQPNCDLPSKLQCRVIAIHLKVENNSDETYVEITLMPDTTQVVIPTENENQFRPIVNSFTKVLTASDTSAQGEFSVPCKHAIECLPPLDMSQPIPAQELIAIDLHGNQWRFKHSYRVPRGDTTGWNAFTTSKKLVVGDVIVFARGETGELRVGIR.

The segment at residues phenylalanine 126–arginine 222 is a DNA-binding region (TF-B3).

This sequence belongs to the ARF family. As to quaternary structure, homo and heterodimers.

It localises to the nucleus. Functionally, auxin response factors (ARFs) are transcriptional factors that binds specifically to the DNA sequence 5'-TGTCTC-3' found in the auxin-responsive promoter elements (AuxREs). Could act as transcriptional activator or repressor. Formation of heterodimers with Aux/IAA proteins may alter their ability to modulate early auxin response genes expression. This Arabidopsis thaliana (Mouse-ear cress) protein is Putative auxin response factor 23 (ARF23).